The sequence spans 78 residues: Beta-defensin 105 (78 aa).

The first 27 residues, 1–27, serve as a signal peptide directing secretion; that stretch reads MALIRKTFYFLFAMFFILVQLPSGCQA. 3 disulfides stabilise this stretch: Cys43-Cys74, Cys53-Cys67, and Cys57-Cys73.

This sequence belongs to the beta-defensin family. As to expression, specifically expressed in testis.

It localises to the secreted. Has antibacterial activity. The polypeptide is Beta-defensin 105 (DEFB105A) (Homo sapiens (Human)).